Reading from the N-terminus, the 312-residue chain is Olfactory receptor 10C1 (312 aa).

Over 1–24 (MSANTSMVTEFLLLGFSHLADLQG) the chain is Extracellular. Residue Asn4 is glycosylated (N-linked (GlcNAc...) asparagine). The helical transmembrane segment at 25 to 45 (LLFSVFLTIYLLTVAGNFLIV) threads the bilayer. Residues 46–53 (VLVSTDAA) are Cytoplasmic-facing. The helical transmembrane segment at 54 to 74 (LQSPMYFFLRTLSALEIGYTS) threads the bilayer. Residues 75-98 (VTVPLLLHHLLTGRRHISRSGCAL) lie on the Extracellular side of the membrane. Cys96 and Cys188 form a disulfide bridge. The helical transmembrane segment at 99-119 (QMFFFLFFGATECCLLAAMAY) threads the bilayer. Topologically, residues 120-138 (DRYAAICEPLRYPLLLSHR) are cytoplasmic. The chain crosses the membrane as a helical span at residues 139-159 (VCLQLAGSAWACGVLVGLGHT). Over 160–196 (PFIFSLPFCGPNTIPQFFCEIQPVLQLVCGDTSLNEL) the chain is Extracellular. Residues 197–216 (QIILATALLILCPFGLILGS) form a helical membrane-spanning segment. Residues 217 to 236 (YGRILVTIFRIPSVAGRRKA) are Cytoplasmic-facing. Residues 237–257 (FSTCSSHLIMVSLFYGTALFI) traverse the membrane as a helical segment. At 258–270 (YIRPKASYDPATD) the chain is on the extracellular side. Residues 271–291 (PLVSLFYAVVTPILNPIIYSL) form a helical membrane-spanning segment. The Cytoplasmic segment spans residues 292–312 (RNTEVKAALKRTIQKTVPMEI).

Belongs to the G-protein coupled receptor 1 family.

Its subcellular location is the cell membrane. In terms of biological role, odorant receptor. The sequence is that of Olfactory receptor 10C1 (OR10C1) from Homo sapiens (Human).